Here is a 567-residue protein sequence, read N- to C-terminus: Diacylglycerol kinase epsilon (567 aa).

Residues 22 to 42 form a helical membrane-spanning segment; it reads LILWTLCSVLLPVFITFWCSL. Phorbol-ester/DAG-type zinc fingers lie at residues 59 to 108 and 124 to 177; these read KHGW…RFQC and PHHW…NEKC. A DAGKc domain is found at 215 to 356; sequence KQWTPLIILA…LDRWKVQVTN (142 aa).

The protein belongs to the eukaryotic diacylglycerol kinase family. In terms of tissue distribution, expressed predominantly in testis. Expressed in endothelium, platelets and podocytes (at protein level).

The protein resides in the membrane. It is found in the cytoplasm. It carries out the reaction a 1,2-diacyl-sn-glycerol + ATP = a 1,2-diacyl-sn-glycero-3-phosphate + ADP + H(+). The catalysed reaction is 1-hexadecanoyl-2-(5Z,8Z,11Z,14Z-eicosatetraenoyl)-sn-glycerol + ATP = 1-hexadecanoyl-2-(5Z,8Z,11Z,14Z-eicosatetraenoyl)-sn-glycero-3-phosphate + ADP + H(+). The enzyme catalyses 1-octadecanoyl-2-(5Z,8Z,11Z,14Z-eicosatetraenoyl)-sn-glycerol + ATP = 1-octadecanoyl-2-(5Z,8Z,11Z,14Z-eicosatetraenoyl)-sn-glycero-3-phosphate + ADP + H(+). It catalyses the reaction 1-eicosanoyl-2-(5Z,8Z,11Z,14Z)-eicosatetraenoyl-sn-glycerol + ATP = 1-eicosanoyl-2-(5Z,8Z,11Z,14Z)-eicosatetraenoyl-sn-glycero-3-phosphate + ADP + H(+). It carries out the reaction 1,2-di-(5Z,8Z,11Z,14Z)-eicosatetraenoyl-sn-glycerol + ATP = 1,2-di-(5Z,8Z,11Z,14Z)-eicosatetraenoyl-sn-glycero-3-phosphate + ADP + H(+). The catalysed reaction is 1-octadecanoyl-2-(9Z,12Z)-octadecadienoyl-sn-glycerol + ATP = 1-octadecanoyl-2-(9Z,12Z-octadecadienoyl)-sn-glycero-3-phosphate + ADP + H(+). The enzyme catalyses 1,2-di-(9Z,12Z-octadecadienoyl)-sn-glycerol + ATP = 1,2-di-(9Z,12Z-octadecadienoyl)-sn-glycero-3-phosphate + ADP + H(+). It catalyses the reaction 1,2-di-(9Z-octadecenoyl)-sn-glycerol + ATP = 1,2-di-(9Z-octadecenoyl)-sn-glycero-3-phosphate + ADP + H(+). Its pathway is lipid metabolism; glycerolipid metabolism. Undergoes competitive inhibition by its own product 1,2-diacyl-sn-glycero-3-phosphate/phosphatidic acid. The strongest inhibition being observed in vitro with 1-octadecanoyl-2-(5Z,8Z,11Z,14Z-eicosatetraenoyl)-sn-glycero-3-phosphate, a major intermediate in the phosphatidylinositol turnover cycle and more generally by diacylglycerols with an arachidonoyl acyl chain at the sn-2 position. Membrane-bound diacylglycerol kinase that converts diacylglycerol/DAG into phosphatidic acid/phosphatidate/PA and regulates the respective levels of these two bioactive lipids. Thereby, acts as a central switch between the signaling pathways activated by these second messengers with different cellular targets and opposite effects in numerous biological processes. Also plays an important role in the biosynthesis of complex lipids. Displays specificity for diacylglycerol substrates with an arachidonoyl acyl chain at the sn-2 position, with the highest activity toward 1-octadecanoyl-2-(5Z,8Z,11Z,14Z-eicosatetraenoyl)-sn-glycerol the main diacylglycerol intermediate within the phosphatidylinositol turnover cycle. Can also phosphorylate diacylglycerol substrates with a linoleoyl acyl chain at the sn-2 position but much less efficiently. This Homo sapiens (Human) protein is Diacylglycerol kinase epsilon (DGKE).